The primary structure comprises 288 residues: Quinate/shikimate dehydrogenase (288 aa).

Residues Lys71 and Asp107 each coordinate substrate. Residues 132–135 (AGGA), 155–158 (NRRD), Lys205, 232–235 (CVYN), and Gly255 each bind NAD(+).

It belongs to the shikimate dehydrogenase family. As to quaternary structure, homodimer.

The enzyme catalyses L-quinate + NAD(+) = 3-dehydroquinate + NADH + H(+). It catalyses the reaction L-quinate + NADP(+) = 3-dehydroquinate + NADPH + H(+). The catalysed reaction is shikimate + NADP(+) = 3-dehydroshikimate + NADPH + H(+). It carries out the reaction shikimate + NAD(+) = 3-dehydroshikimate + NADH + H(+). It functions in the pathway metabolic intermediate biosynthesis; chorismate biosynthesis; chorismate from D-erythrose 4-phosphate and phosphoenolpyruvate: step 4/7. Its function is as follows. The actual biological function of YdiB remains unclear, nor is it known whether 3-dehydroshikimate or quinate represents the natural substrate. Catalyzes the reversible NAD-dependent reduction of both 3-dehydroshikimate (DHSA) and 3-dehydroquinate to yield shikimate (SA) and quinate, respectively. It can use both NAD or NADP for catalysis, however it has higher catalytic efficiency with NAD. The sequence is that of Quinate/shikimate dehydrogenase from Escherichia coli O139:H28 (strain E24377A / ETEC).